The primary structure comprises 424 residues: Serine--tRNA ligase (424 aa).

231–233 (TAE) contacts L-serine. An ATP-binding site is contributed by 262–264 (RSE). Residue E285 coordinates L-serine. 349–352 (EISS) serves as a coordination point for ATP. S385 is a binding site for L-serine.

Belongs to the class-II aminoacyl-tRNA synthetase family. Type-1 seryl-tRNA synthetase subfamily. As to quaternary structure, homodimer. The tRNA molecule binds across the dimer.

The protein resides in the cytoplasm. It catalyses the reaction tRNA(Ser) + L-serine + ATP = L-seryl-tRNA(Ser) + AMP + diphosphate + H(+). The catalysed reaction is tRNA(Sec) + L-serine + ATP = L-seryl-tRNA(Sec) + AMP + diphosphate + H(+). Its pathway is aminoacyl-tRNA biosynthesis; selenocysteinyl-tRNA(Sec) biosynthesis; L-seryl-tRNA(Sec) from L-serine and tRNA(Sec): step 1/1. Its function is as follows. Catalyzes the attachment of serine to tRNA(Ser). Is also able to aminoacylate tRNA(Sec) with serine, to form the misacylated tRNA L-seryl-tRNA(Sec), which will be further converted into selenocysteinyl-tRNA(Sec). This Marinobacter nauticus (strain ATCC 700491 / DSM 11845 / VT8) (Marinobacter aquaeolei) protein is Serine--tRNA ligase.